Reading from the N-terminus, the 424-residue chain is S-inosyl-L-homocysteine hydrolase (424 aa).

2 residues coordinate substrate: aspartate 130 and glutamate 155. 156-158 contacts NAD(+); the sequence is TTT. Residues lysine 185 and aspartate 189 each coordinate substrate. NAD(+)-binding positions include asparagine 190, 219–224, glutamate 242, asparagine 277, 298–300, and asparagine 346; these read GYGWCG and AGH.

The protein belongs to the adenosylhomocysteinase family. Requires NAD(+) as cofactor.

The protein localises to the cytoplasm. It carries out the reaction S-inosyl-L-homocysteine + H2O = L-homocysteine + inosine. It participates in amino-acid biosynthesis; S-adenosyl-L-methionine biosynthesis. Its function is as follows. Catalyzes the hydrolysis of S-inosyl-L-homocysteine (SIH) to L-homocysteine (Hcy) and inosine. Likely functions in a S-adenosyl-L-methionine (SAM) recycling pathway from S-adenosyl-L-homocysteine (SAH) produced from SAM-dependent methylation reactions. Can also catalyze the reverse reaction in vitro, i.e. the synthesis of SIH from Hcy and inosine. The sequence is that of S-inosyl-L-homocysteine hydrolase from Methanopyrus kandleri (strain AV19 / DSM 6324 / JCM 9639 / NBRC 100938).